The chain runs to 144 residues: Large ribosomal subunit protein uL13 (144 aa).

This sequence belongs to the universal ribosomal protein uL13 family. In terms of assembly, part of the 50S ribosomal subunit.

Functionally, this protein is one of the early assembly proteins of the 50S ribosomal subunit, although it is not seen to bind rRNA by itself. It is important during the early stages of 50S assembly. This Desulfovibrio desulfuricans (strain ATCC 27774 / DSM 6949 / MB) protein is Large ribosomal subunit protein uL13.